Consider the following 85-residue polypeptide: Large ribosomal subunit protein bL27 (85 aa).

A disordered region spans residues 1–20 (MATKKAGGSTRNGRDSEAKR).

This sequence belongs to the bacterial ribosomal protein bL27 family.

In Actinobacillus pleuropneumoniae serotype 5b (strain L20), this protein is Large ribosomal subunit protein bL27.